The primary structure comprises 123 residues: Large ribosomal subunit protein bL12 (123 aa).

This sequence belongs to the bacterial ribosomal protein bL12 family. Homodimer. Part of the ribosomal stalk of the 50S ribosomal subunit. Forms a multimeric L10(L12)X complex, where L10 forms an elongated spine to which 2 to 4 L12 dimers bind in a sequential fashion. Binds GTP-bound translation factors.

Functionally, forms part of the ribosomal stalk which helps the ribosome interact with GTP-bound translation factors. Is thus essential for accurate translation. In Shewanella sp. (strain ANA-3), this protein is Large ribosomal subunit protein bL12.